The chain runs to 327 residues: Zinc transport protein ZntB (327 aa).

Residues 1–271 (METIYGSSLK…AMNRRTYTMS (271 aa)) lie on the Cytoplasmic side of the membrane. A helical transmembrane segment spans residues 272–292 (LLAMIFLPTTFLTGLFGVNLG). At 293-300 (GIPGNEYY) the chain is on the periplasmic side. The chain crosses the membrane as a helical span at residues 301 to 321 (LGFAIFCLLLFGLVLFVAWWL). Over 322-327 (KKSKWL) the chain is Cytoplasmic.

Belongs to the CorA metal ion transporter (MIT) (TC 1.A.35) family.

It localises to the cell inner membrane. It carries out the reaction Zn(2+)(out) + H(+)(out) = Zn(2+)(in) + H(+)(in). Zinc transporter. Acts as a Zn(2+):proton symporter, which likely mediates zinc ion uptake. This chain is Zinc transport protein ZntB, found in Photorhabdus laumondii subsp. laumondii (strain DSM 15139 / CIP 105565 / TT01) (Photorhabdus luminescens subsp. laumondii).